Here is a 689-residue protein sequence, read N- to C-terminus: Collagen alpha-2(IX) chain (689 aa).

Residues 1–23 (MAAATASPRSLLVLLQVVVLALA) form the signal peptide. A disordered region spans residues 26 to 518 (RGPPGERGPP…QPGRQGVEGR (493 aa)). A triple-helical region 4 (COL4) region spans residues 27–163 (GPPGERGPPG…PGKPGRPGTI (137 aa)). The span at 31–43 (ERGPPGPPGPPGV) shows a compositional bias: pro residues. Over residues 44–56 (PGSDGIDGDNGPP) the composition is skewed to low complexity. Composition is skewed to pro residues over residues 106–127 (LPGP…PGPV) and 144–157 (PDGP…PGKP). Proline 160 carries the 4-hydroxyproline modification. Positions 164-180 (QGLEGSADFLCPTNCPP) are nonhelical region 4 (NC4). Serine 169 carries an O-linked (Xyl...) (glycosaminoglycan) serine glycan. The triple-helical region 3 (COL3) stretch occupies residues 181-519 (GMKGPPGLQG…PGRQGVEGRD (339 aa)). 5-hydroxylysine is present on lysine 183. O-linked (Gal...) hydroxylysine glycosylation occurs at lysine 183. A compositionally biased stretch (gly residues) spans 343-352 (GTKGGPGDQG). Composition is skewed to low complexity over residues 353-366 (EPGP…SGPP) and 393-413 (RGPV…EQGP). The interval 520–549 (ATDQHIVDVALKMLQEQLAEVAVSAKREAL) is nonhelical region 3 (NC3). A triple-helical region 2 (COL2) region spans residues 550–632 (GAVGMMGPPG…PGLPGRPGQA (83 aa)). A disordered region spans residues 554 to 663 (MMGPPGPPGP…LPGPVGLPGF (110 aa)). Positions 557-566 (PPGPPGPPGY) are enriched in pro residues. Over residues 599 to 611 (KRGEKGDPGEVGR) the composition is skewed to basic and acidic residues. Residues 633-634 (IN) form a nonhelical region 2 (NC2) region. The interval 635-664 (GKDGDRGSPGAPGEAGRPGLPGPVGLPGFC) is triple-helical region 1 (COL1). Positions 665-689 (EPAACLGASAYASARLTEPGSIKGP) are nonhelical region 1 (NC1).

It belongs to the fibril-associated collagens with interrupted helices (FACIT) family. Heterotrimer of an alpha 1(IX), an alpha 2(IX) and an alpha 3(IX) chain. The chains are linked to each other by interchain disulfide bonds. Trimers are also cross-linked via hydroxylysines. In terms of processing, covalently linked to the telopeptides of type II collagen by lysine-derived cross-links. Post-translationally, prolines at the third position of the tripeptide repeating unit (G-X-Y) are hydroxylated in some or all of the chains.

The protein resides in the secreted. It localises to the extracellular space. Its subcellular location is the extracellular matrix. In terms of biological role, structural component of hyaline cartilage and vitreous of the eye. The sequence is that of Collagen alpha-2(IX) chain from Homo sapiens (Human).